Consider the following 487-residue polypeptide: Cysteine--tRNA ligase (487 aa).

Position 27 (C27) interacts with Zn(2+). The 'HIGH' region signature appears at 29–39 (VTVYDLCHIGH). C211, H236, and E240 together coordinate Zn(2+). The 'KMSKS' region signature appears at 268–272 (KMSKS). ATP is bound at residue K271.

The protein belongs to the class-I aminoacyl-tRNA synthetase family. In terms of assembly, monomer. Zn(2+) is required as a cofactor.

The protein localises to the cytoplasm. The catalysed reaction is tRNA(Cys) + L-cysteine + ATP = L-cysteinyl-tRNA(Cys) + AMP + diphosphate. The polypeptide is Cysteine--tRNA ligase (Thermodesulfovibrio yellowstonii (strain ATCC 51303 / DSM 11347 / YP87)).